An 851-amino-acid polypeptide reads, in one-letter code: Transforming growth factor beta receptor type 3 (851 aa).

A signal peptide spans 1–20 (MTSHYVIAIFALMSSCLATA). Residues 21–787 (GPEPGALCEL…IFHGLDTLTV (767 aa)) are Extracellular-facing. Cysteine 52 and cysteine 197 are disulfide-bonded. N-linked (GlcNAc...) asparagine glycosylation is found at asparagine 141 and asparagine 492. The 276-residue stretch at 455–730 (KCDNEKMIVA…PKCVPPDEAC (276 aa)) folds into the ZP domain. O-linked (Xyl...) (glycosaminoglycan) serine glycosylation is found at serine 534 and serine 545. N-linked (GlcNAc...) asparagine glycans are attached at residues asparagine 571, asparagine 590, and asparagine 697. Intrachain disulfides connect cysteine 639-cysteine 705, cysteine 660-cysteine 730, and cysteine 710-cysteine 723. The interval 737–751 (IIWAMMQNKKTFTKP) is interaction with TGF-beta ligand. A helical membrane pass occupies residues 788–809 (MGIAFAAFVIGALLTGALWYIY). Over 810–851 (SHTGETAGRQQVPTSPPASENSSAAHSIGSTQSTPCSSSSTA) the chain is Cytoplasmic. A disordered region spans residues 816–851 (AGRQQVPTSPPASENSSAAHSIGSTQSTPCSSSSTA). Residues 817–834 (GRQQVPTSPPASENSSAA) are compositionally biased toward polar residues. A compositionally biased stretch (low complexity) spans 836 to 851 (SIGSTQSTPCSSSSTA). Position 840 is a phosphothreonine (threonine 840).

As to quaternary structure, forms homodimers and homooligomers. Interacts with DYNLT4. Interacts with integrin ITGA5:ITGB1; this interaction promotes the internalization and trafficking of ITGA5:ITGB1 into endocytic vesicles. Interacts with TGFB1, BMP2, BMP5, BMP7 or GDF5 and inhibin A via the ligand binding domains. Interacts with ALK3/BMPR1A; this interaction results in the cell surface retention of BMPR1A. Interacts with ALK6/BMPR1B; this interaction enhances BMPR1B-mediated stimulation of the BMP signaling pathway. Interacts with the scaffolding protein beta-arrestin2/ARRB2; this interaction mediates internalization of TGFBR3 and thus regulates migration, actin cytoskeleton and activation of CDC42. In terms of assembly, (Microbial infection) Interacts with human cytomegalovirus trimer complex composed of gH, gL, and gO; these interactions may promote HCMV cell entry in specific cell types. In terms of processing, extensively modified by glycosaminoglycan groups (GAG). Phosphorylated in the cytoplasmic domain by the type II receptor TGFBR2 at THR-840 to mediate recruitment of ARRB2 and subsequent internalization of TGFBR2 and TGFBR3.

It localises to the cell membrane. Its subcellular location is the secreted. It is found in the extracellular space. The protein resides in the extracellular matrix. Functionally, cell surface receptor that regulates diverse cellular processes including cell proliferation, differentiation, migration, and apoptosis. Initiates BMP, inhibin, and TGF-beta signaling pathways by interacting with different ligands including TGFB1, BMP2, BMP5, BMP7 or GDF5. Alternatively, acts as a cell surface coreceptor for BMP ligands, serving to enhance ligand binding by differentially regulating BMPR1A/ALK3 and BMPR1B/ALK6 receptor trafficking. Promotes epithelial cell adhesion, focal adhesion formation and integrin signaling during epithelial cell spreading on fibronectin. By interacting with the scaffolding protein beta-arrestin2/ARRB2, regulates migration or actin cytoskeleton and promotes the activation of CDC42 as well as the inhibition of NF-kappa-B. In gonadotrope cells, acts as an inhibin A coreceptor and regulates follicle-stimulating hormone (FSH) levels and female fertility. Plays a role in the inhibition of directed and random cell migration in epithelial cells by altering the actin cytoskeletal organization. Participates in epithelial-mesenchymal transformation (EMT) upon binding to BMP2 or TGFB2, by activating the PAR6/SMURF1/RHOA pathway. Its function is as follows. (Microbial infection) May act as a receptor for human cytomegalovirus in different cell types by interacting with HCMV trimer composed of GO, GH and GL. This Homo sapiens (Human) protein is Transforming growth factor beta receptor type 3.